A 399-amino-acid polypeptide reads, in one-letter code: Succinate--CoA ligase [ADP-forming] subunit beta (399 aa).

One can recognise an ATP-grasp domain in the interval 9–254 (KELLAKFGVA…ETEEDPAEIE (246 aa)). Residues lysine 46, 53–55 (GRG), alanine 112, and glutamate 117 contribute to the ATP site. Positions 209 and 223 each coordinate Mg(2+). Substrate is bound by residues asparagine 274 and 331 to 333 (GIM).

The protein belongs to the succinate/malate CoA ligase beta subunit family. In terms of assembly, heterotetramer of two alpha and two beta subunits. Mg(2+) is required as a cofactor.

It catalyses the reaction succinate + ATP + CoA = succinyl-CoA + ADP + phosphate. It carries out the reaction GTP + succinate + CoA = succinyl-CoA + GDP + phosphate. Its pathway is carbohydrate metabolism; tricarboxylic acid cycle; succinate from succinyl-CoA (ligase route): step 1/1. In terms of biological role, succinyl-CoA synthetase functions in the citric acid cycle (TCA), coupling the hydrolysis of succinyl-CoA to the synthesis of either ATP or GTP and thus represents the only step of substrate-level phosphorylation in the TCA. The beta subunit provides nucleotide specificity of the enzyme and binds the substrate succinate, while the binding sites for coenzyme A and phosphate are found in the alpha subunit. In Rhizorhabdus wittichii (strain DSM 6014 / CCUG 31198 / JCM 15750 / NBRC 105917 / EY 4224 / RW1) (Sphingomonas wittichii), this protein is Succinate--CoA ligase [ADP-forming] subunit beta.